The sequence spans 514 residues: Putative thymidine phosphorylase (514 aa).

Belongs to the thymidine/pyrimidine-nucleoside phosphorylase family. Type 2 subfamily.

It carries out the reaction thymidine + phosphate = 2-deoxy-alpha-D-ribose 1-phosphate + thymine. The sequence is that of Putative thymidine phosphorylase from Sphingopyxis alaskensis (strain DSM 13593 / LMG 18877 / RB2256) (Sphingomonas alaskensis).